We begin with the raw amino-acid sequence, 255 residues long: Small ribosomal subunit protein eS4 (255 aa).

The S4 RNA-binding domain maps to 43 to 115 (IPLLILVRDV…PTRFFTLHPI (73 aa)).

Belongs to the eukaryotic ribosomal protein eS4 family.

This Hyperthermus butylicus (strain DSM 5456 / JCM 9403 / PLM1-5) protein is Small ribosomal subunit protein eS4.